Reading from the N-terminus, the 53-residue chain is Tsetse thrombin inhibitor (53 aa).

The first 21 residues, 1–21, serve as a signal peptide directing secretion; the sequence is MKFFTVLFFLLSIIYLIVAAP.

In terms of tissue distribution, expressed at high levels in salivary glands and midguts of adult tsetse flies.

The protein localises to the secreted. In terms of biological role, potent and specific inhibitor of human thrombin. It is also a potent inhibitor of thrombin-induced platelet aggregation. It is capable of antagonizing host hemostasis and facilitating blood feeding. The polypeptide is Tsetse thrombin inhibitor (TTI) (Glossina morsitans morsitans (Savannah tsetse fly)).